The sequence spans 502 residues: Protein krueppel (502 aa).

Disordered stretches follow at residues 115-164 and 178-202; these read PPQG…KLSV and DMYH…THDG. Low complexity-rich tracts occupy residues 119-136 and 183-198; these read THLH…STPL and SGGP…SPNS. 5 consecutive C2H2-type zinc fingers follow at residues 222 to 244, 250 to 272, 278 to 300, 306 to 328, and 334 to 354; these read FTCK…ERTH, FECP…MRLH, YHCS…LRVH, YTCE…MLVH, and FECE…NHKC. Disordered regions lie at residues 399–427 and 445–502; these read NESV…SVDG and RLPP…HQQH. Residues 410 to 419 are compositionally biased toward acidic residues; the sequence is EDDGPLDLSE. 3 positions are modified to phosphoserine: S468, S471, and S477. Acidic residues predominate over residues 482–491; it reads DDIDLYDLDD.

This sequence belongs to the krueppel C2H2-type zinc-finger protein family.

It is found in the nucleus. Its function is as follows. Krueppel is a gap class segmentation protein. It is involved in the segmentation of the embryo and in the differentiation of the Malpighian tubules. In Drosophila melanogaster (Fruit fly), this protein is Protein krueppel (Kr).